The following is a 164-amino-acid chain: Vesiculogenesis and immune response regulator (164 aa).

In terms of processing, could be O-mannosylated. Is likely mannosylated on Thr-61 when overexpressed in M.smegmatis.

It is found in the cell inner membrane. The protein resides in the cytoplasm. Virulence factor that regulates vesiculogenesis. Acts by regulating the production of mycobacterial membrane vesicles (MV) bearing Toll-like receptor 2 (TLR2) ligands, including the lipoproteins LpqH, a major host TLR2 agonist, and SodC. By restraining the release of most of the material that activates host cells through TLR2, VirR reduces the immunostimulant potential of M.tuberculosis and increases its virulence. May contribute to cell envelope integrity. Its function is as follows. When overexpressed in M.smegmatis, it modulates the production of IL-10, IL-12 p40 and TNF-alpha by RAW264.7 macrophages and it decreases the killing of M.smegmatis. The sequence is that of Vesiculogenesis and immune response regulator from Mycobacterium tuberculosis (strain ATCC 25618 / H37Rv).